Here is a 676-residue protein sequence, read N- to C-terminus: Urocanate hydratase (676 aa).

The disordered stretch occupies residues 15-35; the sequence is PLPENRGRQAGVPHAPVRTPS. Residues 126 to 127, Q204, 251 to 253, E271, 317 to 318, 343 to 347, 354 to 355, Y403, and G594 each bind NAD(+); these read GG, GMS, NV, QTSCH, and YY.

This sequence belongs to the urocanase family. NAD(+) serves as cofactor.

The catalysed reaction is 4-imidazolone-5-propanoate = trans-urocanate + H2O. The protein operates within amino-acid degradation; L-histidine degradation into L-glutamate; N-formimidoyl-L-glutamate from L-histidine: step 2/3. This chain is Urocanate hydratase (UROC1), found in Homo sapiens (Human).